Here is a 432-residue protein sequence, read N- to C-terminus: Adenylosuccinate synthetase (432 aa).

Residues 12–18 (GDEGKGK) and 40–42 (GHT) each bind GTP. D13 acts as the Proton acceptor in catalysis. Residues D13 and G40 each coordinate Mg(2+). IMP is bound by residues 13 to 16 (DEGK), 38 to 41 (NAGH), T133, R147, Q228, T243, and R307. The Proton donor role is filled by H41. 303 to 309 (TTTGRPR) contacts substrate. GTP contacts are provided by residues R309, 335-337 (KLD), and 417-419 (GVG).

Belongs to the adenylosuccinate synthetase family. As to quaternary structure, homodimer. It depends on Mg(2+) as a cofactor.

It is found in the cytoplasm. The catalysed reaction is IMP + L-aspartate + GTP = N(6)-(1,2-dicarboxyethyl)-AMP + GDP + phosphate + 2 H(+). It functions in the pathway purine metabolism; AMP biosynthesis via de novo pathway; AMP from IMP: step 1/2. Its function is as follows. Plays an important role in the de novo pathway of purine nucleotide biosynthesis. Catalyzes the first committed step in the biosynthesis of AMP from IMP. The protein is Adenylosuccinate synthetase of Nocardioides sp. (strain ATCC BAA-499 / JS614).